The primary structure comprises 245 residues: MIIPALDLIDGTVVRLHQGDYGKQRDYGNDPLPRLQDYAAQGAEVLHLVDLTGAKDPAKRQIPLIKTLVAGVNVPVQVGGGVRSEEDVAALLEAGVARVVVGSTAVKSPEMVKGWFERFGADALVLALDVRIDEQGNKQVAVSGWQENSGVSLEQLVETYLPVGLKHVLCTDISRDGTLAGSNVSLYEEVCAKYPQVAFQSSGGIGDIDDVAALRGTGVRGVIVGRALLEGKFTVKEAIACWQNA.

The active-site Proton acceptor is the aspartate 7. Aspartate 129 functions as the Proton donor in the catalytic mechanism.

This sequence belongs to the HisA/HisF family.

It localises to the cytoplasm. It catalyses the reaction 1-(5-phospho-beta-D-ribosyl)-5-[(5-phospho-beta-D-ribosylamino)methylideneamino]imidazole-4-carboxamide = 5-[(5-phospho-1-deoxy-D-ribulos-1-ylimino)methylamino]-1-(5-phospho-beta-D-ribosyl)imidazole-4-carboxamide. It functions in the pathway amino-acid biosynthesis; L-histidine biosynthesis; L-histidine from 5-phospho-alpha-D-ribose 1-diphosphate: step 4/9. This chain is 1-(5-phosphoribosyl)-5-[(5-phosphoribosylamino)methylideneamino] imidazole-4-carboxamide isomerase, found in Escherichia fergusonii (strain ATCC 35469 / DSM 13698 / CCUG 18766 / IAM 14443 / JCM 21226 / LMG 7866 / NBRC 102419 / NCTC 12128 / CDC 0568-73).